A 366-amino-acid polypeptide reads, in one-letter code: MALPNGISSKQELLEAQAHVWNHIYSYINSMSLKCAIQLGIPDAIHKHGNPITLSQLADALNINKAKSHGLFRLMRILVHSGFFDKVKVKVKVEGEDEEEEEDAYSLTPASRLLLRSEPLSVAPFALAMSDPVYTETWHHLSEWFRNDAVAAFDTKYGMTFPEYAVADDRLNVLFNEAMACDAGFVNSILTTECREIFDGLESMVDVGGGTGATAKGIAAAFPGMECTVLDLPNVVGGLKGSENLSFVSGDMFDFIPHADAIFMKFILHDWNDEECVKILKKCKEAISRSNNSCRKIILVEIVMEDEKETHEATETKLFFDMQMLAIITGKERSEKEWGKLFFDAGFTNYKITRVLGLRSVIEVFP.

S-adenosyl-L-methionine contacts are provided by residues 207–210 (VGGG), 231–232 (DL), 251–252 (DM), and Lys265. His269 (proton acceptor) is an active-site residue.

The protein belongs to the class I-like SAM-binding methyltransferase superfamily. Cation-independent O-methyltransferase family. COMT subfamily. In terms of assembly, homodimer.

The enzyme catalyses 3,3',4',5,7,8-hexahydroxyflavone + S-adenosyl-L-methionine = 3,3',4',5,7-pentahydroxy-8-methoxyflavone + S-adenosyl-L-homocysteine + H(+). It catalyses the reaction 4',7,8-trihydroxyflavone + S-adenosyl-L-methionine = 4',7-dihydroxy-8-methoxyflavone + S-adenosyl-L-homocysteine + H(+). The catalysed reaction is 8-hydroxy-7-methoxyflavone + S-adenosyl-L-methionine = 7,8-dimethoxyflavone + S-adenosyl-L-homocysteine + H(+). It functions in the pathway flavonoid metabolism. Functionally, flavonoid 8-O-methyltransferase involved in the biosynthesis of polymethoxylated flavonoids natural products such as pebrellin, aroma compounds which contribute to the flavor of peppermint, and exhibit pharmacological activities such as anti-allergic, anti-oxidant, antibacterial, anti-proliferative, and anti-inflammatory effects. Catalyzes S-adenosylmethionine-dependent regioselective 8-O-methylation of flavonoids; active on various hydroxylated flavonoid substrates, including 7,8,3'4'-tetrahydroxy-flavone, 7,8,4'-trihydroxy-flavone and 8-hydroxy-flavone 7-methyl ether. This is 8-hydroxyquercetin 8-O-methyltransferase from Mentha piperita (Peppermint).